Reading from the N-terminus, the 182-residue chain is Small ribosomal subunit protein uS4c (182 aa).

The interval 12 to 31 is disordered; that stretch reads PGFTSKRPRSGSDLKNPLRS. One can recognise an S4 RNA-binding domain in the interval 82–143; sequence MRLDNILFRL…KQRSKALIQN (62 aa).

It belongs to the universal ribosomal protein uS4 family. In terms of assembly, part of the 30S ribosomal subunit. Contacts protein S5. The interaction surface between S4 and S5 is involved in control of translational fidelity.

Its subcellular location is the plastid. It is found in the chloroplast. One of the primary rRNA binding proteins, it binds directly to 16S rRNA where it nucleates assembly of the body of the 30S subunit. Its function is as follows. With S5 and S12 plays an important role in translational accuracy. In Hymenocallis littoralis (Beach spider-lily), this protein is Small ribosomal subunit protein uS4c (rps4).